A 138-amino-acid polypeptide reads, in one-letter code: Single-stranded DNA-binding protein 3 (138 aa).

An SSB domain is found at 1–104 (MINNIVLVGR…VVAENFQLLE (104 aa)). Over residues 105–121 (SRNSQQQTNQSGNSSNS) the composition is skewed to low complexity. Residues 105-138 (SRNSQQQTNQSGNSSNSYFGNANKMDISDDDLPF) form a disordered region. The Important for interaction with partner proteins motif lies at 133–138 (DDDLPF).

As to quaternary structure, homotetramer.

Plays an important role in DNA replication, recombination and repair. Binds to ssDNA and to an array of partner proteins to recruit them to their sites of action during DNA metabolism. The sequence is that of Single-stranded DNA-binding protein 3 (ssb3) from Streptococcus agalactiae serotype V (strain ATCC BAA-611 / 2603 V/R).